We begin with the raw amino-acid sequence, 443 residues long: 5-methylthioadenosine/S-adenosylhomocysteine deaminase 1 (443 aa).

The Zn(2+) site is built by His-69 and His-71. Residues Glu-98 and His-191 each coordinate substrate. A Zn(2+)-binding site is contributed by His-218. Substrate-binding residues include Glu-221 and Asp-306. Asp-306 is a Zn(2+) binding site.

Belongs to the metallo-dependent hydrolases superfamily. MTA/SAH deaminase family. It depends on Zn(2+) as a cofactor.

The catalysed reaction is S-adenosyl-L-homocysteine + H2O + H(+) = S-inosyl-L-homocysteine + NH4(+). It carries out the reaction S-methyl-5'-thioadenosine + H2O + H(+) = S-methyl-5'-thioinosine + NH4(+). In terms of biological role, catalyzes the deamination of 5-methylthioadenosine and S-adenosyl-L-homocysteine into 5-methylthioinosine and S-inosyl-L-homocysteine, respectively. Is also able to deaminate adenosine. The protein is 5-methylthioadenosine/S-adenosylhomocysteine deaminase 1 of Syntrophus aciditrophicus (strain SB).